A 201-amino-acid chain; its full sequence is Glutathione peroxidase 1, mitochondrial (201 aa).

A mitochondrion-targeting transit peptide spans 1-27 (MLLTRKNVAVRPARAARRDVRAMSLLG). The active site involves Sec-75. A non-standard amino acid (selenocysteine) is located at residue Sec-75.

The protein resides in the mitochondrion. The enzyme catalyses 2 glutathione + H2O2 = glutathione disulfide + 2 H2O. In terms of biological role, may constitute a glutathione peroxidase-like protective system against oxidative stresses. Hydrogen peroxide, tert-butyl hydroperoxide and cumene, but not phosphatidylcholine hydroperoxide, can act as acceptors. This Chlamydomonas reinhardtii (Chlamydomonas smithii) protein is Glutathione peroxidase 1, mitochondrial.